Here is a 218-residue protein sequence, read N- to C-terminus: Glycoprotein UL1 (218 aa).

A signal peptide spans 1–27 (MGVQCNSKLLLLAVLITIILSSILVQA). The chain crosses the membrane as a helical span at residues 178–198 (VATHVGWTATVVIIICVLTYV).

Belongs to the RL11 family.

Its subcellular location is the virion membrane. The chain is Glycoprotein UL1 (UL1) from Homo sapiens (Human).